The chain runs to 336 residues: Ferredoxin--NADP reductase 1 (336 aa).

Residues glutamate 37, lysine 45, phenylalanine 50, valine 90, leucine 125, aspartate 287, and threonine 328 each contribute to the FAD site.

Belongs to the ferredoxin--NADP reductase type 2 family. As to quaternary structure, homodimer. Requires FAD as cofactor.

The catalysed reaction is 2 reduced [2Fe-2S]-[ferredoxin] + NADP(+) + H(+) = 2 oxidized [2Fe-2S]-[ferredoxin] + NADPH. This Bacillus subtilis (strain 168) protein is Ferredoxin--NADP reductase 1 (ycgT).